The following is a 358-amino-acid chain: MLERLNFIENKYEELSNKISDPSVMANQKEWQKLCKEHADLEIIVNTYREYKKAQEDLESDKEMLKEESDKDLREMAQEEIKELTLKLEDLERELTILLLPKDPNDDKDVFIEIRAGAGGEEAALFASNLLRMYTRYAERKNWKVETMSLNATDIGGFKEVTVAIKGKGAYSRLKYESGVHRVQRVPDTESSGRIHTSTATVAVLPEVDDVDININANDLRIDVYRASGHGGQCVNTTDSAVRITHLPTGLVVTCQDEKSQLKNKEKAMKVLKARLFEAAEAERAASIAEDRKSQVGTGDRSERIRTYNYPQGRITDHRIGLTLYKLETFLDGDIDEVIEALVTEDQAEKMKDLGRVN.

Residue Q233 is modified to N5-methylglutamine.

It belongs to the prokaryotic/mitochondrial release factor family. Methylated by PrmC. Methylation increases the termination efficiency of RF1.

It is found in the cytoplasm. Functionally, peptide chain release factor 1 directs the termination of translation in response to the peptide chain termination codons UAG and UAA. This Clostridium botulinum (strain 657 / Type Ba4) protein is Peptide chain release factor 1.